The sequence spans 283 residues: MFS-type transporter eupM (283 aa).

7 helical membrane-spanning segments follow: residues 68–88, 111–131, 136–156, 165–185, 196–216, 227–247, and 263–283; these read LVAW…WGAM, IAWI…VAGP, GGFK…YMML, VLLA…TPMI, IGLA…VYPI, FAWT…IPII, and LIDL…ATMI.

The protein belongs to the major facilitator superfamily. Monocarboxylate porter (TC 2.A.1.13) family.

It localises to the membrane. MFS-type transporter; part of the gene cluster that mediates the biosynthesis of eupenifeldin, a bistropolone meroterpenoid that acts as an antitumor agent. The protein is MFS-type transporter eupM of Phoma sp.